The chain runs to 291 residues: ATP synthase gamma chain (291 aa).

The protein belongs to the ATPase gamma chain family. As to quaternary structure, F-type ATPases have 2 components, CF(1) - the catalytic core - and CF(0) - the membrane proton channel. CF(1) has five subunits: alpha(3), beta(3), gamma(1), delta(1), epsilon(1). CF(0) has three main subunits: a, b and c.

Its subcellular location is the cell membrane. Produces ATP from ADP in the presence of a proton gradient across the membrane. The gamma chain is believed to be important in regulating ATPase activity and the flow of protons through the CF(0) complex. This Streptococcus pyogenes serotype M49 (strain NZ131) protein is ATP synthase gamma chain.